The primary structure comprises 373 residues: Dual-specificity RNA methyltransferase RlmN (373 aa).

Glu94 serves as the catalytic Proton acceptor. Positions 100–339 (EDDRATLCVS…VIVRKTRGDD (240 aa)) constitute a Radical SAM core domain. Cys107 and Cys344 are disulfide-bonded. Residues Cys114, Cys118, and Cys121 each coordinate [4Fe-4S] cluster. S-adenosyl-L-methionine-binding positions include 168-169 (GE), Ser200, 222-224 (SIH), and Asn301. The S-methylcysteine intermediate role is filled by Cys344.

It belongs to the radical SAM superfamily. RlmN family. It depends on [4Fe-4S] cluster as a cofactor.

The protein localises to the cytoplasm. It carries out the reaction adenosine(2503) in 23S rRNA + 2 reduced [2Fe-2S]-[ferredoxin] + 2 S-adenosyl-L-methionine = 2-methyladenosine(2503) in 23S rRNA + 5'-deoxyadenosine + L-methionine + 2 oxidized [2Fe-2S]-[ferredoxin] + S-adenosyl-L-homocysteine. It catalyses the reaction adenosine(37) in tRNA + 2 reduced [2Fe-2S]-[ferredoxin] + 2 S-adenosyl-L-methionine = 2-methyladenosine(37) in tRNA + 5'-deoxyadenosine + L-methionine + 2 oxidized [2Fe-2S]-[ferredoxin] + S-adenosyl-L-homocysteine. Specifically methylates position 2 of adenine 2503 in 23S rRNA and position 2 of adenine 37 in tRNAs. m2A2503 modification seems to play a crucial role in the proofreading step occurring at the peptidyl transferase center and thus would serve to optimize ribosomal fidelity. The sequence is that of Dual-specificity RNA methyltransferase RlmN from Shewanella sp. (strain MR-7).